The following is an 84-amino-acid chain: U21-theraphotoxin-Cg1a 3 (84 aa).

Positions 1–21 are cleaved as a signal peptide; that stretch reads MKVSVLITLAVLGVMFLLTSA. Positions 22 to 47 are excised as a propeptide; it reads EERGSDQMDSPAWLKSMERIFQSEER. 3 cysteine pairs are disulfide-bonded: Cys-49–Cys-63, Cys-56–Cys-68, and Cys-62–Cys-76. Val-82 is subject to Valine amide.

The protein belongs to the neurotoxin 10 (Hwtx-1) family. 05 (F4a) subfamily. Expressed by the venom gland.

It is found in the secreted. Its function is as follows. Probable ion channel inhibitor. The protein is U21-theraphotoxin-Cg1a 3 of Chilobrachys guangxiensis (Chinese earth tiger tarantula).